Consider the following 257-residue polypeptide: Isoprenyl transferase (257 aa).

The active site involves Asp-34. Asp-34 provides a ligand contact to Mg(2+). Residues 35–38, Trp-39, Arg-47, His-51, and 79–81 each bind substrate; these read GNGR and STE. Catalysis depends on Asn-82, which acts as the Proton acceptor. Substrate is bound by residues Trp-83, Arg-85, Arg-202, and 208-210; that span reads RLS. A Mg(2+)-binding site is contributed by Glu-221.

This sequence belongs to the UPP synthase family. In terms of assembly, homodimer. Mg(2+) is required as a cofactor.

Its function is as follows. Catalyzes the condensation of isopentenyl diphosphate (IPP) with allylic pyrophosphates generating different type of terpenoids. This chain is Isoprenyl transferase, found in Geobacillus kaustophilus (strain HTA426).